Consider the following 398-residue polypeptide: Cathepsin E (398 aa).

The signal sequence occupies residues 1–21 (MKPLFVLLLLLLLLDLAQAQG). The propeptide at 22–58 (VLHRVPLRRHQSLRKKLRAQGQLSDFWRSHNLDMIEF) is activation peptide. The Peptidase A1 domain occupies 80-394 (YFGTVSIGSP…DRGNNQVGLA (315 aa)). An N-linked (GlcNAc...) asparagine glycan is attached at Asn92. Asp98 is a catalytic residue. Intrachain disulfides connect Cys111–Cys116 and Cys274–Cys278. The active site involves Asp283.

This sequence belongs to the peptidase A1 family. In terms of assembly, homodimer; disulfide-linked. In terms of processing, glycosylated. The nature of the carbohydrate chain varies between cell types. In brain microglia, the proenzyme contains a high mannose-type oligosaccharide, while the mature enzyme contains a complex-type oligosaccharide. In stomach and spleen, the mature enzyme contains a high mannose-type oligosaccharide. In erythrocyte membranes, the mature enzyme contains a complex-type oligosaccharide. As to expression, expressed abundantly in lymphocytes and macrophages of the thymus and spleen, and in the M cells of the intestine. In the brain, expression is limited to reactive microglial cells, the large pyrimidial neurons in the cerebral cortex, the CA1 and CA3 pyrimidial neurons of the hippocampus, the large neurons of the neostriatum, and the Purkinje neurons of the cerebellum.

It is found in the endosome. The catalysed reaction is Similar to cathepsin D, but slightly broader specificity.. In terms of biological role, may have a role in immune function. Probably involved in the processing of antigenic peptides during MHC class II-mediated antigen presentation. May play a role in activation-induced lymphocyte depletion in the thymus, and in neuronal degeneration and glial cell activation in the brain. The polypeptide is Cathepsin E (Ctse) (Rattus norvegicus (Rat)).